A 446-amino-acid chain; its full sequence is BAG family molecular chaperone regulator 7 (446 aa).

Positions 230 to 252 (TGGEKKKKHEEKEKKEKIETKSK) are disordered. The segment covering 239-250 (EEKEKKEKIETK) has biased composition (basic and acidic residues). One can recognise an IQ domain in the interval 303-332 (PEYAAVMIQRAFKAYLIRRSKSLRALRDLA). Residues 330-407 (DLAIAKTKLK…AMLDVVDPQP (78 aa)) enclose the BAG domain. Threonine 443 carries the phosphothreonine modification.

Binds to the ATPase domain of HSP70/HSC70 chaperones. Interacts with HSP70-11/BIP2.

It localises to the endoplasmic reticulum. Functionally, co-chaperone that regulates diverse cellular pathways, such as programmed cell death and stress responses. Necessary for the proper maintenance of the unfolded protein response (UPR) during heat and cold tolerance. In Arabidopsis thaliana (Mouse-ear cress), this protein is BAG family molecular chaperone regulator 7 (BAG7).